Consider the following 97-residue polypeptide: UPF0416 protein RC0826 (97 aa).

The N-terminal stretch at 1–33 (MRIFVKAAISTAAWRFYAHPTVAMGICVGTALA) is a signal peptide.

It belongs to the UPF0416 family.

This chain is UPF0416 protein RC0826, found in Rickettsia conorii (strain ATCC VR-613 / Malish 7).